A 776-amino-acid chain; its full sequence is Protein SEY1 (776 aa).

Topologically, residues 1-681 (MADRSAIQLI…KRSIITTRTH (681 aa)) are cytoplasmic. Residues 34–263 (GLDYHVISVF…TENYYFKPQY (230 aa)) enclose the GB1/RHD3-type G domain. 44–51 (GSQSSGKS) is a binding site for GTP. A helical transmembrane segment spans residues 682–702 (IPPWIYVLLAVLGWNEFVAVI). Over 703–705 (RNP) the chain is Lumenal. A helical membrane pass occupies residues 706–726 (LFVTLTLILGATFFVIHKFGL). Residues 727 to 776 (WGPVVNVVQSAVGETRTAIKDKLRQFVVEDHEVKESFEMKDFSKNEQKEK) lie on the Cytoplasmic side of the membrane.

It belongs to the TRAFAC class dynamin-like GTPase superfamily. GB1/RHD3 GTPase family. RHD3 subfamily. As to quaternary structure, interacts with RTN1 and YOP1; GTP binding is not required for these interactions.

It is found in the endoplasmic reticulum membrane. Its function is as follows. Cooperates with the reticulon proteins RTN1 and RTN2 and the tubule-shaping DP1 family protein YOP1 to generate and maintain the structure of the tubular endoplasmic reticulum network. Has GTPase activity, which is required for its function in ER organization. The sequence is that of Protein SEY1 from Saccharomyces cerevisiae (strain AWRI1631) (Baker's yeast).